We begin with the raw amino-acid sequence, 499 residues long: Phenylalanine--tRNA ligase alpha subunit (499 aa).

L-phenylalanine-binding positions include Thr342, Gln381–Asp383, and Phe422. Glu424 lines the Mg(2+) pocket. L-phenylalanine is bound at residue Phe447.

Belongs to the class-II aminoacyl-tRNA synthetase family. Phe-tRNA synthetase alpha subunit type 2 subfamily. Tetramer of two alpha and two beta subunits. Requires Mg(2+) as cofactor.

It is found in the cytoplasm. It carries out the reaction tRNA(Phe) + L-phenylalanine + ATP = L-phenylalanyl-tRNA(Phe) + AMP + diphosphate + H(+). The chain is Phenylalanine--tRNA ligase alpha subunit from Pyrococcus furiosus (strain ATCC 43587 / DSM 3638 / JCM 8422 / Vc1).